A 201-amino-acid polypeptide reads, in one-letter code: MEITTIDTKSKLKLNKEIFAYTYNEGLVHQAVVTFMNNARSGNSAQKTRSEVSGGGKKPWNQKGTGRARAGTIRSPLWRSGGVTFASKKRDYSQKLNKKMYKRALRSIISELCRTGNLVVVSDFQCDNHKTKDFLKKMNQMEISNALIIMSEVGENEYLGSRNLIDYDICDVTTIDPVSLLRFEKVVVTEAAIKKIEEQLQ.

The tract at residues 42 to 67 (GNSAQKTRSEVSGGGKKPWNQKGTGR) is disordered.

This sequence belongs to the universal ribosomal protein uL4 family. As to quaternary structure, part of the 50S ribosomal subunit.

One of the primary rRNA binding proteins, this protein initially binds near the 5'-end of the 23S rRNA. It is important during the early stages of 50S assembly. It makes multiple contacts with different domains of the 23S rRNA in the assembled 50S subunit and ribosome. Functionally, forms part of the polypeptide exit tunnel. This is Large ribosomal subunit protein uL4 from Legionella pneumophila (strain Corby).